Here is a 205-residue protein sequence, read N- to C-terminus: MTKRSEAKYKIDRRMGQNIWGRPKSPVNRREYGPGQHGQRRKGKLSDFGVQLRAKQKLKGYYANISERQFHSIYVEATRLKGDSGENLIGLLERRLDTVVYRAKFVSTMFAARQFINHGHVKVNGKRVNIASYKVKVGDLVEVKESSKQLTFVLEANQLAERDVPDFIEVDHGKMTAKFIRIPHLSDVPFAVQMEPHLIVEFYSR.

Residues 18–46 are disordered; it reads NIWGRPKSPVNRREYGPGQHGQRRKGKLS. Positions 94-157 constitute an S4 RNA-binding domain; sequence RRLDTVVYRA…KQLTFVLEAN (64 aa).

It belongs to the universal ribosomal protein uS4 family. As to quaternary structure, part of the 30S ribosomal subunit. Contacts protein S5. The interaction surface between S4 and S5 is involved in control of translational fidelity.

In terms of biological role, one of the primary rRNA binding proteins, it binds directly to 16S rRNA where it nucleates assembly of the body of the 30S subunit. Its function is as follows. With S5 and S12 plays an important role in translational accuracy. This chain is Small ribosomal subunit protein uS4, found in Rhodopseudomonas palustris (strain BisB18).